Here is a 166-residue protein sequence, read N- to C-terminus: MALRLEDKQAIVAEVNEAAKGALSAVVADSRGVTVGEMTGLRKAAREAGVYIRVVRNTLVKRAVEGTDFECLNETFTGPTLIAFSNEHPGAAARLLKDFAADQEKFAIKAAAFEGELIPAADIDRLAKLPTYDEAIAQLMMTMKEASAGKLVRTLAALRDQKEEAA.

The protein belongs to the universal ribosomal protein uL10 family. As to quaternary structure, part of the ribosomal stalk of the 50S ribosomal subunit. The N-terminus interacts with L11 and the large rRNA to form the base of the stalk. The C-terminus forms an elongated spine to which L12 dimers bind in a sequential fashion forming a multimeric L10(L12)X complex.

Functionally, forms part of the ribosomal stalk, playing a central role in the interaction of the ribosome with GTP-bound translation factors. This Shewanella sediminis (strain HAW-EB3) protein is Large ribosomal subunit protein uL10.